An 81-amino-acid chain; its full sequence is ATP synthase subunit c (81 aa).

The next 2 helical transmembrane spans lie at 5-25 (VAAASVIAAALAVGLAAIGPG) and 57-77 (LAFMESLTIYGLVIALVLLFA).

Belongs to the ATPase C chain family. As to quaternary structure, F-type ATPases have 2 components, F(1) - the catalytic core - and F(0) - the membrane proton channel. F(1) has five subunits: alpha(3), beta(3), gamma(1), delta(1), epsilon(1). F(0) has four main subunits: a(1), b(1), b'(1) and c(10-14). The alpha and beta chains form an alternating ring which encloses part of the gamma chain. F(1) is attached to F(0) by a central stalk formed by the gamma and epsilon chains, while a peripheral stalk is formed by the delta, b and b' chains.

It is found in the cellular thylakoid membrane. In terms of biological role, f(1)F(0) ATP synthase produces ATP from ADP in the presence of a proton or sodium gradient. F-type ATPases consist of two structural domains, F(1) containing the extramembraneous catalytic core and F(0) containing the membrane proton channel, linked together by a central stalk and a peripheral stalk. During catalysis, ATP synthesis in the catalytic domain of F(1) is coupled via a rotary mechanism of the central stalk subunits to proton translocation. Its function is as follows. Key component of the F(0) channel; it plays a direct role in translocation across the membrane. A homomeric c-ring of between 10-14 subunits forms the central stalk rotor element with the F(1) delta and epsilon subunits. The sequence is that of ATP synthase subunit c from Microcystis aeruginosa (strain NIES-843 / IAM M-2473).